The primary structure comprises 458 residues: uncharacterized protein (458 aa).

Belongs to the glycerate kinase type-2 family.

This is an uncharacterized protein from Caenorhabditis elegans.